Reading from the N-terminus, the 608-residue chain is Dihydroxy-acid dehydratase, chloroplastic (608 aa).

The N-terminal 34 residues, 1–34 (MQATIFSPRATLFPCKPLLPSHNVNSRRPSIISC), are a transit peptide targeting the chloroplast. Serine 35 carries the N-acetylserine modification. Cysteine 100 contributes to the [2Fe-2S] cluster binding site. Aspartate 132 lines the Mg(2+) pocket. Cysteine 173 contributes to the [2Fe-2S] cluster binding site. Residue aspartate 174 participates in Mg(2+) binding. Cysteine 245 serves as a coordination point for [2Fe-2S] cluster. Glutamate 497 provides a ligand contact to Mg(2+). Serine 523 acts as the Proton acceptor in catalysis.

Belongs to the IlvD/Edd family. It depends on [2Fe-2S] cluster as a cofactor. The cofactor is Mg(2+).

The protein localises to the plastid. Its subcellular location is the chloroplast. It carries out the reaction (2R)-2,3-dihydroxy-3-methylbutanoate = 3-methyl-2-oxobutanoate + H2O. The catalysed reaction is (2R,3R)-2,3-dihydroxy-3-methylpentanoate = (S)-3-methyl-2-oxopentanoate + H2O. Its pathway is amino-acid biosynthesis; L-isoleucine biosynthesis; L-isoleucine from 2-oxobutanoate: step 3/4. The protein operates within amino-acid biosynthesis; L-valine biosynthesis; L-valine from pyruvate: step 3/4. Its activity is regulated as follows. Is highly competitively inhibited by the fungal sesquiterpenoid aspterric acid, which is effective as a herbicide in spray applications. In terms of biological role, functions in the biosynthesis of branched-chain amino acids. Catalyzes the dehydration of (2R,3R)-2,3-dihydroxy-3-methylpentanoate (2,3-dihydroxy-3-methylvalerate) into 2-oxo-3-methylpentanoate (2-oxo-3-methylvalerate) and of (2R)-2,3-dihydroxy-3-methylbutanoate (2,3-dihydroxyisovalerate) into 2-oxo-3-methylbutanoate (2-oxoisovalerate), the penultimate precursor to L-isoleucine and L-valine, respectively. The sequence is that of Dihydroxy-acid dehydratase, chloroplastic from Arabidopsis thaliana (Mouse-ear cress).